The primary structure comprises 236 residues: Thymidylate kinase (236 aa).

Position 9 to 16 (9 to 16 (GPEGSGKS)) interacts with ATP.

Belongs to the thymidylate kinase family.

The enzyme catalyses dTMP + ATP = dTDP + ADP. Phosphorylation of dTMP to form dTDP in both de novo and salvage pathways of dTTP synthesis. This chain is Thymidylate kinase, found in Herpetosiphon aurantiacus (strain ATCC 23779 / DSM 785 / 114-95).